We begin with the raw amino-acid sequence, 223 residues long: Phosphoribosylformylglycinamidine synthase subunit PurQ (223 aa).

The Glutamine amidotransferase type-1 domain maps to 2–223; the sequence is KTAIIQLPGL…FQSALELAKG (222 aa). C86 functions as the Nucleophile in the catalytic mechanism. Residues H196 and E198 contribute to the active site.

Part of the FGAM synthase complex composed of 1 PurL, 1 PurQ and 2 PurS subunits.

It is found in the cytoplasm. It carries out the reaction N(2)-formyl-N(1)-(5-phospho-beta-D-ribosyl)glycinamide + L-glutamine + ATP + H2O = 2-formamido-N(1)-(5-O-phospho-beta-D-ribosyl)acetamidine + L-glutamate + ADP + phosphate + H(+). The enzyme catalyses L-glutamine + H2O = L-glutamate + NH4(+). It functions in the pathway purine metabolism; IMP biosynthesis via de novo pathway; 5-amino-1-(5-phospho-D-ribosyl)imidazole from N(2)-formyl-N(1)-(5-phospho-D-ribosyl)glycinamide: step 1/2. Functionally, part of the phosphoribosylformylglycinamidine synthase complex involved in the purines biosynthetic pathway. Catalyzes the ATP-dependent conversion of formylglycinamide ribonucleotide (FGAR) and glutamine to yield formylglycinamidine ribonucleotide (FGAM) and glutamate. The FGAM synthase complex is composed of three subunits. PurQ produces an ammonia molecule by converting glutamine to glutamate. PurL transfers the ammonia molecule to FGAR to form FGAM in an ATP-dependent manner. PurS interacts with PurQ and PurL and is thought to assist in the transfer of the ammonia molecule from PurQ to PurL. The chain is Phosphoribosylformylglycinamidine synthase subunit PurQ from Bartonella henselae (strain ATCC 49882 / DSM 28221 / CCUG 30454 / Houston 1) (Rochalimaea henselae).